A 510-amino-acid chain; its full sequence is Membrane-bound transcription factor site-2 protease (510 aa).

The Cytoplasmic portion of the chain corresponds to 1 to 3 (MIP). Residues 4–24 (VSLVVVVVGGWTAVYLADLVL) traverse the membrane as a helical segment. Residues 25 to 74 (KSSVYFKHSYEDWLEKNGLSISPFHIRWQTSVFNRAFYSWGRRKARMLYQ) are Lumenal-facing. 2 helical membrane passes run 75-95 (WFNF…FLLG) and 96-107 (KTLMQTLAQMMA). The Lumenal portion of the chain corresponds to 108 to 135 (DSPSSSSSSSSSSSSSSSSSIHNEQVLQ). Residues 136 to 160 (VVVPGINLPVNQLTYFFAAVLISGV) form a helical membrane-spanning segment. Residue histidine 162 coordinates Zn(2+). Glutamate 163 is an active-site residue. The next 3 membrane-spanning stretches (helical) occupy residues 165–177 (GHGI…QVRF), 178–200 (NGFG…TTHL), and 220–242 (FVLA…PFYY). Position 166 (histidine 166) interacts with Zn(2+). The Lumenal portion of the chain corresponds to 243–437 (TGVGVLITEV…LPVIVETFVK (195 aa)). A glycan (N-linked (GlcNAc...) asparagine) is linked at asparagine 328. The next 2 helical transmembrane spans lie at 438–455 (YLIS…VPCF) and 456–467 (ALDGQWILNSFL). Over 468–483 (DATLTSVIGDNDVKDL) the chain is Lumenal. The helical transmembrane segment at 484-504 (IGFFILLGGSVLLAANVTLGL) threads the bilayer. The Cytoplasmic portion of the chain corresponds to 505-510 (WMVTAR).

It belongs to the peptidase M50A family. It depends on Zn(2+) as a cofactor.

It is found in the membrane. Its subcellular location is the cytoplasm. The protein localises to the golgi apparatus membrane. It carries out the reaction Cleaves several transcription factors that are type-2 transmembrane proteins within membrane-spanning domains. Known substrates include sterol regulatory element-binding protein (SREBP) -1, SREBP-2 and forms of the transcriptional activator ATF6. SREBP-2 is cleaved at the site 477-DRSRILL-|-CVLTFLCLSFNPLTSLLQWGGA-505. The residues Asn-Pro, 11 residues distal to the site of cleavage in the membrane-spanning domain, are important for cleavage by S2P endopeptidase. Replacement of either of these residues does not prevent cleavage, but there is no cleavage if both of these residues are replaced.. Zinc metalloprotease that mediates intramembrane proteolysis of proteins such as ATF6, ATF6B, SREBF1/SREBP1 and SREBF2/SREBP2. Catalyzes the second step in the proteolytic activation of the sterol regulatory element-binding proteins (SREBPs) SREBF1/SREBP1 and SREBF2/SREBP2: cleaves SREBPs within the first transmembrane segment, thereby releasing the N-terminal segment with a portion of the transmembrane segment attached. Mature N-terminal SREBP fragments shuttle to the nucleus and activate gene transcription. Also mediates the second step in the proteolytic activation of the cyclic AMP-dependent transcription factor ATF-6 (ATF6 and ATF6B). Involved in intramembrane proteolysis during bone formation. In astrocytes and osteoblasts, upon DNA damage and ER stress, mediates the second step of the regulated intramembrane proteolytic activation of the transcription factor CREB3L1, leading to the inhibition of cell-cycle progression. This chain is Membrane-bound transcription factor site-2 protease (MBTPS2), found in Cricetulus griseus (Chinese hamster).